The primary structure comprises 556 residues: Delta-1-pyrroline-5-carboxylate dehydrogenase 12A1, mitochondrial (556 aa).

282–287 (GSSRVA) is an NAD(+) binding site. Glu301 acts as the Proton acceptor in catalysis. The Nucleophile role is filled by Cys336.

This sequence belongs to the aldehyde dehydrogenase family. As to expression, highly expressed in flowers. Constitutively expressed at low levels in the other tissues. Highly expressed in pollen grains and tissues undergoing cell death. Expressed in old leaves, mature siliques and developing embryos.

It localises to the mitochondrion matrix. The enzyme catalyses (S)-1-pyrroline-5-carboxylate + NAD(+) + 2 H2O = L-glutamate + NADH + H(+). It functions in the pathway amino-acid degradation; L-proline degradation into L-glutamate; L-glutamate from L-proline: step 2/2. Plays a role in the inhibition of programmed cell death by converting the toxic proline catabolism intermediate (s)-1-pyrroline-5-carboxylate (P5C) to glutamate. The sequence is that of Delta-1-pyrroline-5-carboxylate dehydrogenase 12A1, mitochondrial from Arabidopsis thaliana (Mouse-ear cress).